We begin with the raw amino-acid sequence, 325 residues long: Elongation factor P--(R)-beta-lysine ligase (325 aa).

Residue 76–78 (SPE) coordinates substrate. Residues 100 to 102 (RNE) and N109 each bind ATP. Y118 is a binding site for substrate. 244 to 245 (EL) serves as a coordination point for ATP. E251 contacts substrate. G300 is a binding site for ATP.

Belongs to the class-II aminoacyl-tRNA synthetase family. EpmA subfamily. In terms of assembly, homodimer.

It catalyses the reaction D-beta-lysine + L-lysyl-[protein] + ATP = N(6)-((3R)-3,6-diaminohexanoyl)-L-lysyl-[protein] + AMP + diphosphate + H(+). In terms of biological role, with EpmB is involved in the beta-lysylation step of the post-translational modification of translation elongation factor P (EF-P) on 'Lys-34'. Catalyzes the ATP-dependent activation of (R)-beta-lysine produced by EpmB, forming a lysyl-adenylate, from which the beta-lysyl moiety is then transferred to the epsilon-amino group of EF-P 'Lys-34'. This Salmonella arizonae (strain ATCC BAA-731 / CDC346-86 / RSK2980) protein is Elongation factor P--(R)-beta-lysine ligase.